The following is a 294-amino-acid chain: Bifunctional protein FolD (294 aa).

Residues 166–168 (GRS), serine 191, and isoleucine 232 each bind NADP(+).

The protein belongs to the tetrahydrofolate dehydrogenase/cyclohydrolase family. As to quaternary structure, homodimer.

The catalysed reaction is (6R)-5,10-methylene-5,6,7,8-tetrahydrofolate + NADP(+) = (6R)-5,10-methenyltetrahydrofolate + NADPH. The enzyme catalyses (6R)-5,10-methenyltetrahydrofolate + H2O = (6R)-10-formyltetrahydrofolate + H(+). The protein operates within one-carbon metabolism; tetrahydrofolate interconversion. Functionally, catalyzes the oxidation of 5,10-methylenetetrahydrofolate to 5,10-methenyltetrahydrofolate and then the hydrolysis of 5,10-methenyltetrahydrofolate to 10-formyltetrahydrofolate. This is Bifunctional protein FolD from Bradyrhizobium sp. (strain BTAi1 / ATCC BAA-1182).